A 412-amino-acid chain; its full sequence is Hyaluronidase-3 (412 aa).

The first 22 residues, 1-22 (MITQLGLTLVVGLTLCLVHVQA), serve as a signal peptide directing secretion. Intrachain disulfides connect Cys-42–Cys-332, Cys-206–Cys-221, Cys-357–Cys-368, Cys-362–Cys-396, and Cys-398–Cys-407. N-linked (GlcNAc...) asparagine glycosylation is present at Asn-69. Residue Glu-129 is the Proton donor of the active site. The N-linked (GlcNAc...) asparagine glycan is linked to Asn-216. The EGF-like domain maps to 353-408 (AATACSHQRCHGHGRCSWKDPGQMEAFLHLQPDDNLGAWKSFRCRCYLGWSGPTCL).

Belongs to the glycosyl hydrolase 56 family. N-glycosylated.

The protein localises to the secreted. It localises to the cell membrane. Its subcellular location is the cytoplasmic vesicle. The protein resides in the secretory vesicle. It is found in the acrosome. The protein localises to the endoplasmic reticulum. It localises to the early endosome. The catalysed reaction is Random hydrolysis of (1-&gt;4)-linkages between N-acetyl-beta-D-glucosamine and D-glucuronate residues in hyaluronate.. Functionally, facilitates sperm penetration into the layer of cumulus cells surrounding the egg by digesting hyaluronic acid. Involved in induction of the acrosome reaction in the sperm. Involved in follicular atresia, the breakdown of immature ovarian follicles that are not selected to ovulate. Induces ovarian granulosa cell apoptosis, possibly via apoptotic signaling pathway involving CASP8 and CASP3 activation, and poly(ADP-ribose) polymerase (PARP) cleavage. Has no hyaluronidase activity in embryonic fibroblasts in vitro. Has no hyaluronidase activity in granulosa cells in vitro. This Rattus norvegicus (Rat) protein is Hyaluronidase-3 (Hyal3).